A 232-amino-acid chain; its full sequence is Ornithine carbamoyltransferase (232 aa).

Carbamoyl phosphate contacts are provided by residues glutamine 15, arginine 39, and 66–69; that span reads HPTQ. L-ornithine contacts are provided by residues asparagine 99, aspartate 163, and 167–168; that span reads SM. Carbamoyl phosphate-binding positions include 204 to 207 and threonine 232; that span reads HCLP.

Belongs to the aspartate/ornithine carbamoyltransferase superfamily. OTCase family.

It is found in the cytoplasm. It carries out the reaction carbamoyl phosphate + L-ornithine = L-citrulline + phosphate + H(+). The protein operates within amino-acid biosynthesis; L-arginine biosynthesis; L-arginine from L-ornithine and carbamoyl phosphate: step 1/3. Functionally, reversibly catalyzes the transfer of the carbamoyl group from carbamoyl phosphate (CP) to the N(epsilon) atom of ornithine (ORN) to produce L-citrulline. The polypeptide is Ornithine carbamoyltransferase (argF) (Neisseria flava).